A 695-amino-acid polypeptide reads, in one-letter code: NADPH--cytochrome P450 reductase (695 aa).

Over 1–8 the chain is Lumenal; that stretch reads MAQLDTLD. The chain crosses the membrane as a helical span at residues 9–31; the sequence is LVVLVALLVGSVAYFTKGTYWAV. At 32-695 the chain is on the cytoplasmic side; sequence AKDPYASSGP…SGSYQEDVWS (664 aa). Positions 66 to 221 constitute a Flavodoxin-like domain; the sequence is CVIFYGSQTG…DFLAWKEPMW (156 aa). FMN is bound by residues 72–77, 123–126, 169–178, and D204; these read SQTGTA, ATYG, and LGNNTYEHYN. An FAD-binding FR-type domain is found at 277–538; it reads HNPFIAPIVE…HVRHSNFKLP (262 aa). R296 is an NADP(+) binding site. Residues 451–454, 469–471, and 486–489 each bind FAD; these read RYYS, TAV, and GVTT. Residues T552, 614 to 615, 620 to 624, and E656 each bind NADP(+); these read SR and KVYVQ. W694 lines the FAD pocket.

Belongs to the NADPH--cytochrome P450 reductase family. This sequence in the N-terminal section; belongs to the flavodoxin family. The protein in the C-terminal section; belongs to the flavoprotein pyridine nucleotide cytochrome reductase family. Requires FAD as cofactor. FMN serves as cofactor.

The protein localises to the endoplasmic reticulum membrane. Its subcellular location is the mitochondrion outer membrane. It localises to the cell membrane. The catalysed reaction is 2 oxidized [cytochrome P450] + NADPH = 2 reduced [cytochrome P450] + NADP(+) + H(+). Its function is as follows. This enzyme is required for electron transfer from NADP to cytochrome P450 in microsomes. It can also provide electron transfer to heme oxygenase and cytochrome B5. Involved in ergosterol biosynthesis. The chain is NADPH--cytochrome P450 reductase from Aspergillus oryzae (strain ATCC 42149 / RIB 40) (Yellow koji mold).